A 164-amino-acid polypeptide reads, in one-letter code: Cyanate hydratase (164 aa).

Active-site residues include Arg90, Glu93, and Ser116.

It belongs to the cyanase family.

It carries out the reaction cyanate + hydrogencarbonate + 3 H(+) = NH4(+) + 2 CO2. In terms of biological role, catalyzes the reaction of cyanate with bicarbonate to produce ammonia and carbon dioxide. The protein is Cyanate hydratase of Vitis vinifera (Grape).